A 635-amino-acid polypeptide reads, in one-letter code: Probable monoacyl phosphatidylinositol tetramannoside-binding protein LpqW (635 aa).

Positions 1–26 (MGVPSPVRRVCVTVGALVALACMVLA) are cleaved as a signal peptide. Disordered stretches follow at residues 32–52 (PPPAPQSTDTPRSTPPPPRRP), 389–412 (NTSVSPAPSVPDSTTTSVSTGPPE), and 511–551 (NAPT…LVKA). Composition is skewed to low complexity over residues 390–411 (TSVSPAPSVPDSTTTSVSTGPP) and 511–531 (NAPTTAPSAPIGPTPSAAPDT).

Belongs to the bacterial solute-binding protein 5 family.

The protein operates within phospholipid metabolism; phosphatidylinositol metabolism. Functionally, may directly or indirectly regulate the accessibility of the key branch point intermediate, monoacyl phosphatidylinositol tetramannoside (AcPIM4), to the elongating alpha-1,6 mannosyltransferases which could regulate the lipoarabinomannans (LAMs) biosynthesis. In Mycobacterium tuberculosis (strain CDC 1551 / Oshkosh), this protein is Probable monoacyl phosphatidylinositol tetramannoside-binding protein LpqW (lpqW).